Here is a 385-residue protein sequence, read N- to C-terminus: Pepsin A (385 aa).

A signal peptide spans 1 to 15; it reads MKWLLLLSLVVLSEC. A propeptide spans 16–59 (activation peptide); sequence LVKVPLVRKKSLRQNLIKNGKLKDFLKTHKHNPASKYFPEAAAL. One can recognise a Peptidase A1 domain in the interval 73-382; the sequence is YFGTIGIGTP…DRANNKVGLA (310 aa). D91 is a catalytic residue. C104 and C109 are oxidised to a cystine. Residue S127 is modified to Phosphoserine. C265 and C269 are oxidised to a cystine. D274 is an active-site residue. Cysteines 308 and 341 form a disulfide.

It belongs to the peptidase A1 family. In terms of processing, minor amounts of the active enzyme occur with 'Ala-58' at the amino end.

The protein resides in the secreted. The catalysed reaction is Preferential cleavage: hydrophobic, preferably aromatic, residues in P1 and P1' positions. Cleaves 1-Phe-|-Val-2, 4-Gln-|-His-5, 13-Glu-|-Ala-14, 14-Ala-|-Leu-15, 15-Leu-|-Tyr-16, 16-Tyr-|-Leu-17, 23-Gly-|-Phe-24, 24-Phe-|-Phe-25 and 25-Phe-|-Tyr-26 bonds in the B chain of insulin.. Its function is as follows. Shows particularly broad specificity; although bonds involving phenylalanine and leucine are preferred, many others are also cleaved to some extent. This is Pepsin A (PGA) from Sus scrofa (Pig).